A 280-amino-acid chain; its full sequence is uncharacterized protein (280 aa).

The N-terminal stretch at 1-21 is a signal peptide; it reads MRPVIKVGLSTASVYPLRAEA.

To M.tuberculosis Rv0498 and S.coelicolor SCO3347.

This is an uncharacterized protein from Mycobacterium leprae (strain TN).